Here is a 466-residue protein sequence, read N- to C-terminus: Cysteine--tRNA ligase (466 aa).

C29 provides a ligand contact to Zn(2+). The 'HIGH' region motif lies at 31–41; sequence ATVQAAPHIGH. C208, H233, and E237 together coordinate Zn(2+). The 'KMSKS' region motif lies at 264–268; the sequence is KMSKS. K267 provides a ligand contact to ATP.

This sequence belongs to the class-I aminoacyl-tRNA synthetase family. Monomer. It depends on Zn(2+) as a cofactor.

It localises to the cytoplasm. It carries out the reaction tRNA(Cys) + L-cysteine + ATP = L-cysteinyl-tRNA(Cys) + AMP + diphosphate. The protein is Cysteine--tRNA ligase of Streptomyces avermitilis (strain ATCC 31267 / DSM 46492 / JCM 5070 / NBRC 14893 / NCIMB 12804 / NRRL 8165 / MA-4680).